We begin with the raw amino-acid sequence, 252 residues long: Imidazole glycerol phosphate synthase subunit HisF (252 aa).

Residues Asp11 and Asp130 contribute to the active site.

Belongs to the HisA/HisF family. Heterodimer of HisH and HisF.

Its subcellular location is the cytoplasm. It catalyses the reaction 5-[(5-phospho-1-deoxy-D-ribulos-1-ylimino)methylamino]-1-(5-phospho-beta-D-ribosyl)imidazole-4-carboxamide + L-glutamine = D-erythro-1-(imidazol-4-yl)glycerol 3-phosphate + 5-amino-1-(5-phospho-beta-D-ribosyl)imidazole-4-carboxamide + L-glutamate + H(+). The protein operates within amino-acid biosynthesis; L-histidine biosynthesis; L-histidine from 5-phospho-alpha-D-ribose 1-diphosphate: step 5/9. Its function is as follows. IGPS catalyzes the conversion of PRFAR and glutamine to IGP, AICAR and glutamate. The HisF subunit catalyzes the cyclization activity that produces IGP and AICAR from PRFAR using the ammonia provided by the HisH subunit. This Lacticaseibacillus casei (strain BL23) (Lactobacillus casei) protein is Imidazole glycerol phosphate synthase subunit HisF.